Reading from the N-terminus, the 131-residue chain is Large ribosomal subunit protein bL19 (131 aa).

Belongs to the bacterial ribosomal protein bL19 family.

In terms of biological role, this protein is located at the 30S-50S ribosomal subunit interface and may play a role in the structure and function of the aminoacyl-tRNA binding site. In Afipia carboxidovorans (strain ATCC 49405 / DSM 1227 / KCTC 32145 / OM5) (Oligotropha carboxidovorans), this protein is Large ribosomal subunit protein bL19.